A 143-amino-acid chain; its full sequence is ATP synthase F(0) complex subunit C2, mitochondrial (143 aa).

A mitochondrion-targeting transit peptide spans 1–68 (MYTCAKFVST…RSFQTSAISR (68 aa)). A helical transmembrane segment spans residues 84-104 (VGVAGSGAGIGTVFGSLIIGY). Lys111 carries the N6,N6,N6-trimethyllysine modification. The chain crosses the membrane as a helical span at residues 119–139 (ILGFALSEAMGLFCLMVAFLI).

Belongs to the ATPase C chain family. In terms of assembly, F-type ATPases have 2 components, CF(1) - the catalytic core - and CF(0) - the membrane proton channel. CF(1) has five subunits: alpha(3), beta(3), gamma(1), delta(1), epsilon(1). CF(0) has three main subunits: a, b and c. Interacts with DNAJC30; interaction is direct. Trimethylated by ATPSCKMT at Lys-111. Methylation is required for proper incorporation of the C subunit into the ATP synthase complex and mitochondrial respiration.

Its subcellular location is the mitochondrion membrane. In terms of biological role, mitochondrial membrane ATP synthase (F(1)F(0) ATP synthase or Complex V) produces ATP from ADP in the presence of a proton gradient across the membrane which is generated by electron transport complexes of the respiratory chain. F-type ATPases consist of two structural domains, F(1) - containing the extramembraneous catalytic core and F(0) - containing the membrane proton channel, linked together by a central stalk and a peripheral stalk. During catalysis, ATP synthesis in the catalytic domain of F(1) is coupled via a rotary mechanism of the central stalk subunits to proton translocation. Part of the complex F(0) domain. A homomeric c-ring of probably 10 subunits is part of the complex rotary element. The protein is ATP synthase F(0) complex subunit C2, mitochondrial of Ovis aries (Sheep).